We begin with the raw amino-acid sequence, 861 residues long: Leucine--tRNA ligase (861 aa).

Positions 42–52 (PYPSGRIHMGH) match the 'HIGH' region motif. The 'KMSKS' region signature appears at 623–627 (KMSKS). Residue Lys626 participates in ATP binding.

This sequence belongs to the class-I aminoacyl-tRNA synthetase family.

The protein localises to the cytoplasm. The catalysed reaction is tRNA(Leu) + L-leucine + ATP = L-leucyl-tRNA(Leu) + AMP + diphosphate. This Caulobacter sp. (strain K31) protein is Leucine--tRNA ligase.